We begin with the raw amino-acid sequence, 436 residues long: NADH-quinone oxidoreductase subunit D 1 (436 aa).

It belongs to the complex I 49 kDa subunit family. In terms of assembly, NDH-1 is composed of 14 different subunits. Subunits NuoB, C, D, E, F, and G constitute the peripheral sector of the complex.

Its subcellular location is the cell inner membrane. It catalyses the reaction a quinone + NADH + 5 H(+)(in) = a quinol + NAD(+) + 4 H(+)(out). In terms of biological role, NDH-1 shuttles electrons from NADH, via FMN and iron-sulfur (Fe-S) centers, to quinones in the respiratory chain. The immediate electron acceptor for the enzyme in this species is believed to be ubiquinone. Couples the redox reaction to proton translocation (for every two electrons transferred, four hydrogen ions are translocated across the cytoplasmic membrane), and thus conserves the redox energy in a proton gradient. This is NADH-quinone oxidoreductase subunit D 1 from Stenotrophomonas maltophilia (strain R551-3).